A 265-amino-acid chain; its full sequence is Energy-coupling factor transporter transmembrane protein EcfT (265 aa).

5 consecutive transmembrane segments (helical) span residues 32 to 52 (MVLL…VFII), 72 to 92 (LVII…GRVI), 115 to 135 (LIML…IALT), 150 to 170 (VPAH…PTLM), and 245 to 265 (LAAF…RFIW).

Belongs to the energy-coupling factor EcfT family. In terms of assembly, forms a stable energy-coupling factor (ECF) transporter complex composed of 2 membrane-embedded substrate-binding proteins (S component), 2 ATP-binding proteins (A component) and 2 transmembrane proteins (T component). May be able to interact with more than 1 S component at a time.

It localises to the cell membrane. Its function is as follows. Transmembrane (T) component of an energy-coupling factor (ECF) ABC-transporter complex. Unlike classic ABC transporters this ECF transporter provides the energy necessary to transport a number of different substrates. This Thermosediminibacter oceani (strain ATCC BAA-1034 / DSM 16646 / JW/IW-1228P) protein is Energy-coupling factor transporter transmembrane protein EcfT.